The chain runs to 124 residues: MGFLTPKSFGEQAEDFACKMMKKKGYHILQRNARSRYGELDIIALHGEVVVFCEVKARQGAVSGSAGEAIDGRKQRQLGRLAEAWRLANPAWMAAPCRFDAVLVAREAQGWHAEIVQDAFQLGW.

The protein belongs to the UPF0102 family.

The protein is UPF0102 protein Mmc1_3298 of Magnetococcus marinus (strain ATCC BAA-1437 / JCM 17883 / MC-1).